The following is a 324-amino-acid chain: GDP-mannose transporter (324 aa).

Residues 1–13 (MSELKSRIGNSGS) lie on the Cytoplasmic side of the membrane. Residues 14-34 (IANSGPVSILCYCASSILMTV) traverse the membrane as a helical segment. Residues 35–44 (TNKFVVNTDG) are Lumenal-facing. A helical membrane pass occupies residues 45–65 (FNMFFVMLFAQSLVCTMCLMV). The Cytoplasmic portion of the chain corresponds to 66 to 76 (LKMFGYAKYRP). Residues 77-97 (LNLIDVKNWLPISFLLVFMIF) traverse the membrane as a helical segment. The Lumenal segment spans residues 98–116 (TSAKALKYMPVPIYTIFKN). Residue N116 is glycosylated (N-linked (GlcNAc...) asparagine). The chain crosses the membrane as a helical span at residues 117 to 137 (LTIILIAYGEVLFFGGSVTPM). Residue E138 is a topological domain, cytoplasmic. A helical membrane pass occupies residues 139 to 159 (LSSFILMVLSSVVASLGDQQA). The Lumenal portion of the chain corresponds to 160 to 170 (AKIAQPLANNS). N168 carries an N-linked (GlcNAc...) asparagine glycan. The helical transmembrane segment at 171 to 191 (ILSPEYYWMFLNCICSASFVL) threads the bilayer. Topologically, residues 192–204 (IMRKRIKLTNFKD) are cytoplasmic. A helical transmembrane segment spans residues 205-225 (YDTMFYNNALALPILLGFSFL). The Lumenal portion of the chain corresponds to 226–243 (SEDWSSENLAQNFSGESL). N237 carries an N-linked (GlcNAc...) asparagine glycan. Residues 244 to 264 (SAMIISGMTSVGISYCSGWCV) form a helical membrane-spanning segment. Over 265 to 270 (RATSST) the chain is Cytoplasmic. A helical transmembrane segment spans residues 271-291 (TYSMVGALNKLPIALAGLIFF). Residues 292 to 295 (DAPR) are Lumenal-facing. The chain crosses the membrane as a helical span at residues 296 to 316 (NFLSIMSIFIGFASGLSYAVA). The Cytoplasmic portion of the chain corresponds to 317–324 (KQKKVQKN).

The protein belongs to the TPT transporter family. SLC35D subfamily. Homooligomer.

The protein resides in the golgi apparatus membrane. Its subcellular location is the cytoplasmic vesicle membrane. It is found in the endoplasmic reticulum membrane. Involved in the import of GDP-mannose from the cytoplasm into the Golgi lumen. This chain is GDP-mannose transporter (VRG4), found in Candida glabrata (strain ATCC 2001 / BCRC 20586 / JCM 3761 / NBRC 0622 / NRRL Y-65 / CBS 138) (Yeast).